The sequence spans 345 residues: Ribonucleoside-diphosphate reductase subunit beta (345 aa).

Fe cation contacts are provided by Asp88, Glu118, and His121. Residue Tyr125 is part of the active site. Fe cation-binding residues include Glu185, Glu219, and His222.

The protein belongs to the ribonucleoside diphosphate reductase small chain family. As to quaternary structure, tetramer of two alpha and two beta subunits. Requires Fe cation as cofactor.

It carries out the reaction a 2'-deoxyribonucleoside 5'-diphosphate + [thioredoxin]-disulfide + H2O = a ribonucleoside 5'-diphosphate + [thioredoxin]-dithiol. Provides the precursors necessary for DNA synthesis. Catalyzes the biosynthesis of deoxyribonucleotides from the corresponding ribonucleotides. The polypeptide is Ribonucleoside-diphosphate reductase subunit beta (nrdB) (Halalkalibacterium halodurans (strain ATCC BAA-125 / DSM 18197 / FERM 7344 / JCM 9153 / C-125) (Bacillus halodurans)).